Consider the following 145-residue polypeptide: D-aminoacyl-tRNA deacylase (145 aa).

The short motif at 137–138 is the Gly-cisPro motif, important for rejection of L-amino acids element; it reads GP.

This sequence belongs to the DTD family. As to quaternary structure, homodimer.

Its subcellular location is the cytoplasm. The enzyme catalyses glycyl-tRNA(Ala) + H2O = tRNA(Ala) + glycine + H(+). It catalyses the reaction a D-aminoacyl-tRNA + H2O = a tRNA + a D-alpha-amino acid + H(+). Functionally, an aminoacyl-tRNA editing enzyme that deacylates mischarged D-aminoacyl-tRNAs. Also deacylates mischarged glycyl-tRNA(Ala), protecting cells against glycine mischarging by AlaRS. Acts via tRNA-based rather than protein-based catalysis; rejects L-amino acids rather than detecting D-amino acids in the active site. By recycling D-aminoacyl-tRNA to D-amino acids and free tRNA molecules, this enzyme counteracts the toxicity associated with the formation of D-aminoacyl-tRNA entities in vivo and helps enforce protein L-homochirality. This chain is D-aminoacyl-tRNA deacylase, found in Shewanella oneidensis (strain ATCC 700550 / JCM 31522 / CIP 106686 / LMG 19005 / NCIMB 14063 / MR-1).